We begin with the raw amino-acid sequence, 389 residues long: 11-beta-hydroxysteroid dehydrogenase-like 5 (389 aa).

Residues 11–31 (LVAPPATMVVMAFAWPLLSFI) form a helical; Signal-anchor for type II membrane protein membrane-spanning segment. Residues 56-82 (GASS…VARR) and Asp107 each bind NADP(+). Ser186 serves as a coordination point for substrate. The active-site Proton acceptor is the Tyr199. NADP(+) contacts are provided by residues 199 to 203 (YSAAK) and Lys203. The interval 337–381 (LMLEGGPPRVPASPPRYTASPPHYTASPPRYPASPPRYPASPPRF) is disordered. The span at 365–378 (PRYPASPPRYPASP) shows a compositional bias: pro residues.

It belongs to the short-chain dehydrogenases/reductases (SDR) family.

It is found in the membrane. This is 11-beta-hydroxysteroid dehydrogenase-like 5 (HSD5) from Arabidopsis thaliana (Mouse-ear cress).